The primary structure comprises 140 residues: Beta/delta-urticatoxin-De2a (140 aa).

A signal peptide spans 1-18 (MKTSTALVLLLALTATSA). Positions 19 to 78 (SSGDHQFIDEQNIMNVAEGKNVISSLSSSGGGDDAAAIMESVLVNGGNRKMVFMMVSGSQ) are excised as a propeptide. Disulfide bonds link Cys-81-Cys-95, Cys-88-Cys-100, Cys-94-Cys-108, Cys-113-Cys-127, Cys-120-Cys-131, and Cys-126-Cys-139.

Belongs to the urticatoxin-2 family. In terms of tissue distribution, expressed in trichomes, that are stiff epidermal hairs located on the surface of petioles and leaves.

The protein localises to the secreted. Functionally, plant defense neurotoxin that causes pain and systemic symptoms in mammals via modulation of voltage-gated sodium channels (Nav). Potent modulator of human Nav1.5/SCN5A (EC(50)=55 nM), Nav1.6/SCN8A (EC(50)=0.86 nM), and Nav1.7/SCN9A (EC(50)=208 nM), where it shifts the activation threshold to more negative potentials and delays fast inactivation. Also shifts the voltage-dependence of steady-state fast inactivation of Nav1.6/SCN8A, but not that of Nav1.5/SCN5A or Nav1.7/SCN9A. On Nav1.7/SCN9A, principally acts by binding to extracellular loops of domain IV (Nav site 3). In vivo, intraplantar injection into mice causes numerous dose-dependent, immediate, and long-lasting spontaneous pain behaviors, while no swelling is observed in the injected paw. At the highest doses tested, systemic symptoms including hypokinesia and hypersalivation are observed. The protein is Beta/delta-urticatoxin-De2a of Dendrocnide excelsa (Giant stinging tree).